We begin with the raw amino-acid sequence, 394 residues long: Probable peptidoglycan glycosyltransferase FtsW (394 aa).

The Cytoplasmic portion of the chain corresponds to 1–27 (MSALRSVAGLLQRWLLPARPAGLYDRQ). A helical membrane pass occupies residues 28–48 (LVVLALALMAVGLVIVASASI). Residues 49-64 (PEGIAINNDPFMFVKR) lie on the Periplasmic side of the membrane. The chain crosses the membrane as a helical span at residues 65–85 (HGLFLVMALGISWFVLQVPMA). Residues 86 to 88 (RWQ) lie on the Cytoplasmic side of the membrane. A helical transmembrane segment spans residues 89–109 (HYNGPMLVLAILMLVLVLLVG). Topologically, residues 110-123 (RSVNGSIRWLPLGP) are periplasmic. A helical membrane pass occupies residues 124–144 (FNLQPAEFGKLALFVYLAGYL). Residues 145-154 (VRRQSEVRER) lie on the Cytoplasmic side of the membrane. Residues 155 to 175 (FIGFMKPMAVLFVVAILLLAQ) traverse the membrane as a helical segment. A topological domain (periplasmic) is located at residue Pro-176. A helical membrane pass occupies residues 177–197 (DLGSVVVMFVTSLGMLFLAGA). Arg-198 is a topological domain (cytoplasmic). The chain crosses the membrane as a helical span at residues 199 to 219 (LGQFIGLILVGVSAVVTLVIA). Over 220 to 279 (EPYRMRRVTSFLDPWADPFGSGYQLTQSLMAFGRGSWFGEGLGNSIQKMEYLPEAHTDFV) the chain is Periplasmic. Residues 280–300 (FAILGEELGYAGVLGALFLIF) traverse the membrane as a helical segment. At 301 to 322 (ALSFKALKLGHQALVAERLYEG) the chain is on the cytoplasmic side. A helical membrane pass occupies residues 323–343 (YLAIGIGIWFSFQTFVNVGAA). The Periplasmic portion of the chain corresponds to 344–354 (SGMMPTKGLTL). The chain crosses the membrane as a helical span at residues 355-375 (PLVSYGGSSLIIMMVAVSMLV). Residues 376-394 (RIDFELRQASAQARVREVS) are Cytoplasmic-facing.

Belongs to the SEDS family. FtsW subfamily.

The protein localises to the cell inner membrane. The enzyme catalyses [GlcNAc-(1-&gt;4)-Mur2Ac(oyl-L-Ala-gamma-D-Glu-L-Lys-D-Ala-D-Ala)](n)-di-trans,octa-cis-undecaprenyl diphosphate + beta-D-GlcNAc-(1-&gt;4)-Mur2Ac(oyl-L-Ala-gamma-D-Glu-L-Lys-D-Ala-D-Ala)-di-trans,octa-cis-undecaprenyl diphosphate = [GlcNAc-(1-&gt;4)-Mur2Ac(oyl-L-Ala-gamma-D-Glu-L-Lys-D-Ala-D-Ala)](n+1)-di-trans,octa-cis-undecaprenyl diphosphate + di-trans,octa-cis-undecaprenyl diphosphate + H(+). It participates in cell wall biogenesis; peptidoglycan biosynthesis. Its function is as follows. Peptidoglycan polymerase that is essential for cell division. The polypeptide is Probable peptidoglycan glycosyltransferase FtsW (Aeromonas salmonicida (strain A449)).